A 240-amino-acid chain; its full sequence is MGRAFEYRRAAKEKRWDKMSKVFPKLAKAITLAAKDGGSEPDTNAKLRTAILNAKAQNMPKDNIDAAIKRASSKEGNLSEITYEGKANFGVLIIMECMTDNPTRTIANLKSYFNKTQGASIVPNGSLEFMFNRKSVFECLKSEVENLKLSLEDLEFALIDYGLEELEEVGDKVIIRGDYNSFKLLNEGFESLKLPILKASLQRIATTPIELNDEQMELTEKLLDRIEDDDDVVALYTNIE.

The protein belongs to the TACO1 family.

The protein localises to the cytoplasm. This Helicobacter pylori (strain G27) protein is Probable transcriptional regulatory protein HPG27_148.